We begin with the raw amino-acid sequence, 340 residues long: MGELMAFLLPLIIVLMVKHSNSRTHSLRYFRLGVSDPIRGVPEFISVGYVDSHPITTYDSVTQQKEPRAPWMAENLAPDHWERYTQLLRGWQQMFKVELKRLQRHYNHSGSHTYQRMIGCELLEDGSTTGFLQYAYDGQDFLIFNKDTLSWLAVDNVAHTIKRAWEANQHELQYQKNWLEEECIAWLKRFLEYGKDTLQRTEPPLVRVNRKETFPGVTTLFCKAHGFYPPEIYMTWMKNGEEIVQEMDYGDILPSGDGTYQTWASFELDPQSSNLYSCHVEHCGVHMVLQVPQESEAIPLVMKAVSGSIVFVIVLTGVGVLVWRRRPREQNGAVYLPTPD.

The signal sequence occupies residues 1-22 (MGELMAFLLPLIIVLMVKHSNS). The segment at 23 to 109 (RTHSLRYFRL…KRLQRHYNHS (87 aa)) is alpha-1. Residues 23–201 (RTHSLRYFRL…EYGKDTLQRT (179 aa)) are antigen-binding cleft. Over 23-302 (RTHSLRYFRL…QESEAIPLVM (280 aa)) the chain is Extracellular. Positions 29 and 31 each coordinate 8-(9H-purin-6-yl)-2-oxa-8-azabicyclo[3.3.1]nona-3,6-diene-4,6-dicarbaldehyde. Residues Arg31, Ser46, and Lys65 each coordinate 5-(2-oxoethylideneamino)-6-(D-ribitylamino)uracil. Residues Arg31, Ser46, and Lys65 each contribute to the 5-(2-oxopropylideneamino)-6-(D-ribitylamino)uracil site. Residues Arg31, Ser46, and Lys65 each contribute to the 7-hydroxy-6-methyl-8-(1-D-ribityl)lumazine site. 8-(9H-purin-6-yl)-2-oxa-8-azabicyclo[3.3.1]nona-3,6-diene-4,6-dicarbaldehyde is bound by residues Lys65 and His80. Lys65 is a 2-amino-4-oxopteridine-6-carbaldehyde binding site. Lys65 serves as a coordination point for pyridoxal. Residue Asn107 is glycosylated (N-linked (GlcNAc...) asparagine). The interval 110–201 (GSHTYQRMIG…EYGKDTLQRT (92 aa)) is alpha-2. Position 116 (Arg116) interacts with 8-(9H-purin-6-yl)-2-oxa-8-azabicyclo[3.3.1]nona-3,6-diene-4,6-dicarbaldehyde. 3 residues coordinate 5-(2-oxoethylideneamino)-6-(D-ribitylamino)uracil: Arg116, Tyr174, and Gln175. Positions 116, 174, and 175 each coordinate 5-(2-oxopropylideneamino)-6-(D-ribitylamino)uracil. 7-hydroxy-6-methyl-8-(1-D-ribityl)lumazine contacts are provided by Arg116, Tyr174, and Gln175. 2 disulfide bridges follow: Cys120/Cys183 and Cys222/Cys278. An alpha-3 region spans residues 202-293 (EPPLVRVNRK…GVHMVLQVPQ (92 aa)). The Ig-like C1-type domain occupies 203-282 (PPLVRVNRKE…SNLYSCHVEH (80 aa)). Residues 294-302 (ESEAIPLVM) form a connecting peptide region. Residues 303-323 (KAVSGSIVFVIVLTGVGVLVW) form a helical membrane-spanning segment. Topologically, residues 324–340 (RRRPREQNGAVYLPTPD) are cytoplasmic.

It belongs to the MHC class I family. In terms of assembly, heterotrimer that consists of MR1, B2M and metabolite antigen. Major classes of metabolite ligands presented by MR1 include riboflavin-related antigens, pyrimidines and ribityl lumazines, nucleobase adducts and folate derivatives. Forms reversible covalent Schiff base complexes with microbial pyrimidine-based metabolite, which serves as a molecular switch triggering complete folding, stable association with B2M and translocation of the ternary complex from endoplasmic reticulum to the plasma membrane. Alternatively, forms non-Schiff base complexes with ribityl lumazines. On antigen-presenting cells, the ternary complex interacts with TCR on MR1-restricted T cells. Interacts with TAPBP and TAPBPL chaperones in the endoplasmic reticulum. TAPBP associated or not with MHC class I peptide loading complex binds ligand-free MR1 or MR1-B2M complex, providing for stable MR1 pools ready for metabolite antigen processing. TAPBPL interacts with MR1 in a ligand-independent way; this interaction may stabilize MR1 pool and facilitate ligand loading and dissociation. Structurally, MR1-B2M heterodimer adopts a topology similar to classical MHC class I molecules, with alpha-1 and alpha-2 domains of MR1 forming the antigen-binding cleft composed of two alpha-helices resting on a floor of 7-stranded anti-parallel beta-pleated sheet. MR1-B2M heterodimer (via alpha-helices) interacts with TCR (via CDR domains). Post-translationally, N-glycosylated.

Its subcellular location is the cell membrane. It is found in the endoplasmic reticulum membrane. It localises to the golgi apparatus membrane. The protein localises to the early endosome membrane. The protein resides in the late endosome membrane. Antigen-presenting molecule specialized in displaying microbial pyrimidine-based metabolites to alpha-beta T cell receptors (TCR) on innate-type mucosal-associated invariant T (MAIT) cells. In complex with B2M preferentially presents riboflavin-derived metabolites to semi-invariant TCRs on MAIT cells, guiding immune surveillance of the microbial metabolome at mucosal epithelial barriers. Signature pyrimidine-based microbial antigens are generated via non-enzymatic condensation of metabolite intermediates of the riboflavin pathway with by-products arising from other metabolic pathways such as glycolysis. Typical potent antigenic metabolites are 5-(2-oxoethylideneamino)-6-D-ribitylaminouracil (5-OE-RU) and 5-(2-oxopropylideneamino)-6-D-ribitylaminouracil (5-OP-RU), products of condensation of 5-amino-6-D-ribityaminouracil (5-A-RU) with glyoxal or methylglyoxal by-products, respectively. May present microbial antigens to various MAIT cell subsets, providing for unique recognition of diverse microbes, including pathogens that do not synthesize riboflavin. Upon antigen recognition, elicits rapid innate-type MAIT cell activation to eliminate pathogenic microbes by directly killing infected cells. During T cell development, drives thymic selection and post-thymic terminal differentiation of MAIT cells in a process dependent on commensal microflora. Acts as an immune sensor of cancer cell metabolome. May present a tumor-specific or -associated metabolite essential for cancer cell survival to a pan-cancer TCR on a non-MAIT CD8-positive T cell clone, triggering T cell-mediated killing of a wide range of cancer cell types. May present tumor-enriched pyridoxal and pyridoxal 5'-phosphate antigens, enabling preferential recognition of cancer cells. Presents nucleobase carbonyl adducts generated during oxidative stress. Captures M3Ade, a nucleobase adduct composed of one adenine modified by a malondialdehyde trimer, for recognition by MR1-restricted T cell clones expressing a polyclonal TCR repertoire. In Pongo pygmaeus (Bornean orangutan), this protein is Major histocompatibility complex class I-related gene protein.